Reading from the N-terminus, the 50-residue chain is Large ribosomal subunit protein bL33 (50 aa).

Belongs to the bacterial ribosomal protein bL33 family.

The protein is Large ribosomal subunit protein bL33 of Sulfurimonas denitrificans (strain ATCC 33889 / DSM 1251) (Thiomicrospira denitrificans (strain ATCC 33889 / DSM 1251)).